Reading from the N-terminus, the 204-residue chain is Holliday junction branch migration complex subunit RuvA (204 aa).

Residues 1 to 64 (MIGRLQGKLI…EDAHLLFGFS (64 aa)) are domain I. The segment at 65–143 (TKTDRTLFRE…GLRQPDFFVE (79 aa)) is domain II. The tract at residues 144–155 (SKHITVPDIVSA) is flexible linker. Residues 156 to 204 (EKETPNDEAVAALVALGYKPPEAAKMVKKVANGDLTSEQLIREALKAAL) form a domain III region.

Belongs to the RuvA family. Homotetramer. Forms an RuvA(8)-RuvB(12)-Holliday junction (HJ) complex. HJ DNA is sandwiched between 2 RuvA tetramers; dsDNA enters through RuvA and exits via RuvB. An RuvB hexamer assembles on each DNA strand where it exits the tetramer. Each RuvB hexamer is contacted by two RuvA subunits (via domain III) on 2 adjacent RuvB subunits; this complex drives branch migration. In the full resolvosome a probable DNA-RuvA(4)-RuvB(12)-RuvC(2) complex forms which resolves the HJ.

It is found in the cytoplasm. The RuvA-RuvB-RuvC complex processes Holliday junction (HJ) DNA during genetic recombination and DNA repair, while the RuvA-RuvB complex plays an important role in the rescue of blocked DNA replication forks via replication fork reversal (RFR). RuvA specifically binds to HJ cruciform DNA, conferring on it an open structure. The RuvB hexamer acts as an ATP-dependent pump, pulling dsDNA into and through the RuvAB complex. HJ branch migration allows RuvC to scan DNA until it finds its consensus sequence, where it cleaves and resolves the cruciform DNA. This is Holliday junction branch migration complex subunit RuvA from Actinobacillus succinogenes (strain ATCC 55618 / DSM 22257 / CCUG 43843 / 130Z).